The chain runs to 546 residues: MATQEVRLKCLLCGIIVLVLSLEGLGILHYEKLSKIGLVKGITRKYKIKSNPLTKDIVIKMIPNVSNVSKCTGTVMENYKSRLTGILSPIKGAIELYNNNTHDLVGDVKLAGVVMAGIAIGIATAAQITAGVALYEAMKNADNINKLKSSIESTNEAVVKLQETAEKTVYVLTALQDYINTNLVPTIDQISCKQTELALDLALSKYLSDLLFVFGPNLQDPVSNSMTIQAISQAFGGNYETLLRTLGYATEDFDDLLESDSIAGQIVYVDLSSYYIIVRVYFPILTEIQQAYVQELLPVSFNNDNSEWISIVPNFVLIRNTLISNIEVKYCLITKKSVICNQDYATPMTASVRECLTGSTDKCPRELVVSSHVPRFALSGGVLFANCISVTCQCQTTGRAISQSGEQTLLMIDNTTCTTVVLGNIIISLGKYLGSINYNSESIAVGPPVYTDKVDISSQISSMNQSLQQSKDYIKEAQKILDTVNPSLISMLSMIILYVLSIAALCIGLITFISFVIVEKKRGNYSRLDDRQVRPVSNGDLYYIGT.

An N-terminal signal peptide occupies residues 1–26 (MATQEVRLKCLLCGIIVLVLSLEGLG). Topologically, residues 27–494 (ILHYEKLSKI…NPSLISMLSM (468 aa)) are extracellular. Asn64, Asn67, and Asn99 each carry an N-linked (GlcNAc...) asparagine; by host glycan. A fusion peptide region spans residues 110–134 (LAGVVMAGIAIGIATAAQITAGVAL). The stretch at 135–163 (YEAMKNADNINKLKSSIESTNEAVVKLQE) forms a coiled coil. Cystine bridges form between Cys331–Cys340, Cys355–Cys363, Cys387–Cys392, and Cys394–Cys417. N-linked (GlcNAc...) asparagine; by host glycosylation is found at Asn414 and Asn464. Residues 459–484 (QISSMNQSLQQSKDYIKEAQKILDTV) are a coiled coil. Residues 495–515 (IILYVLSIAALCIGLITFISF) form a helical membrane-spanning segment. Topologically, residues 516–546 (VIVEKKRGNYSRLDDRQVRPVSNGDLYYIGT) are cytoplasmic.

It belongs to the paramyxoviruses fusion glycoprotein family. In terms of assembly, homotrimer of disulfide-linked F1-F2. Post-translationally, the inactive precursor F0 is glycosylated and proteolytically cleaved into F1 and F2 to be functionally active. The cleavage is mediated by cellular proteases during the transport and maturation of the polypeptide.

It is found in the virion membrane. It localises to the host cell membrane. Functionally, class I viral fusion protein. Under the current model, the protein has at least 3 conformational states: pre-fusion native state, pre-hairpin intermediate state, and post-fusion hairpin state. During viral and plasma cell membrane fusion, the heptad repeat (HR) regions assume a trimer-of-hairpins structure, positioning the fusion peptide in close proximity to the C-terminal region of the ectodomain. The formation of this structure appears to drive apposition and subsequent fusion of viral and plasma cell membranes. Directs fusion of viral and cellular membranes leading to delivery of the nucleocapsid into the cytoplasm. This fusion is pH independent and occurs directly at the outer cell membrane. The trimer of F1-F2 (F protein) probably interacts with G at the virion surface. Upon G binding to its cellular receptor, the hydrophobic fusion peptide is unmasked and interacts with the cellular membrane, inducing the fusion between cell and virion membranes. Later in infection, F proteins expressed at the plasma membrane of infected cells could mediate fusion with adjacent cells to form syncytia, a cytopathic effect that could lead to tissue necrosis. This Hendra virus (isolate Horse/Autralia/Hendra/1994) protein is Fusion glycoprotein F0 (F).